Consider the following 987-residue polypeptide: KAT8 regulatory NSL complex subunit 1-like protein (987 aa).

Lys-134 participates in a covalent cross-link: Glycyl lysine isopeptide (Lys-Gly) (interchain with G-Cter in SUMO2). Ser-462 carries the post-translational modification Phosphoserine. Positions 708–738 (RKKRHLSETALGERTKLEESDFQHTESGSHS) are disordered. Residues 718–731 (LGERTKLEESDFQH) are compositionally biased toward basic and acidic residues. Positions 794–915 (EILTPSWRMV…QSQETKSLWW (122 aa)) constitute a PEHE domain. Lys-859 bears the N6-acetyllysine mark. A disordered region spans residues 949–972 (GEIFGTSVPENGHHPKKQSDGMEE). The span at 959–972 (NGHHPKKQSDGMEE) shows a compositional bias: basic and acidic residues.

Acetylated on lysine residues by KAT8 upon ionizing radiation-induced DNA damage; deacetylated by HDAC3.

This chain is KAT8 regulatory NSL complex subunit 1-like protein (KANSL1L), found in Homo sapiens (Human).